A 252-amino-acid chain; its full sequence is Type II secretion system protein N (252 aa).

The Cytoplasmic portion of the chain corresponds to 1–4 (MKNR). Residues 5–25 (LTIGLLLAAIYLFWLLLSAPA) traverse the membrane as a helical segment. The Periplasmic segment spans residues 26–252 (RLLALTLSDD…QGEWLSEEKK (227 aa)).

This sequence belongs to the GSP N family.

Its subcellular location is the cell inner membrane. Functionally, involved in a type II secretion system (T2SS, formerly general secretion pathway, GSP) for the export of proteins. Required for the translocation of pullulanase. This chain is Type II secretion system protein N (pulN), found in Klebsiella pneumoniae.